We begin with the raw amino-acid sequence, 1184 residues long: DNA-directed RNA polymerase subunit beta (1184 aa).

The segment at 1160–1184 (DDDFTNQNDAFNIVQPENAAAEKTE) is disordered.

The protein belongs to the RNA polymerase beta chain family. In terms of assembly, the RNAP catalytic core consists of 2 alpha, 1 beta, 1 beta' and 1 omega subunit. When a sigma factor is associated with the core the holoenzyme is formed, which can initiate transcription.

The enzyme catalyses RNA(n) + a ribonucleoside 5'-triphosphate = RNA(n+1) + diphosphate. Its function is as follows. DNA-dependent RNA polymerase catalyzes the transcription of DNA into RNA using the four ribonucleoside triphosphates as substrates. This Listeria welshimeri serovar 6b (strain ATCC 35897 / DSM 20650 / CCUG 15529 / CIP 8149 / NCTC 11857 / SLCC 5334 / V8) protein is DNA-directed RNA polymerase subunit beta.